A 79-amino-acid polypeptide reads, in one-letter code: MSEFWHKLGCCVVEKPQPKKRRRRIDRTMIGEPMNFVHLTHIGSGEMGAGDGLAMTGAVQEQMRSKGNRDRPWSNSRAL.

Residues cysteine 10 and cysteine 11 are each lipidated (S-palmitoyl cysteine). One can recognise a CRIB domain in the interval 30-43 (IGEPMNFVHLTHIG). The tract at residues 48–79 (GAGDGLAMTGAVQEQMRSKGNRDRPWSNSRAL) is disordered. Basic and acidic residues predominate over residues 63–72 (MRSKGNRDRP).

This sequence belongs to the CDC42SE/SPEC family. As to quaternary structure, interacts with CDC42 (in GTP-bound form). Interacts weakly with RAC1 and not at all with RHOA.

Its subcellular location is the cytoplasm. The protein localises to the cytoskeleton. It localises to the cell membrane. Probably involved in the organization of the actin cytoskeleton by acting downstream of CDC42, inducing actin filament assembly. Alters CDC42-induced cell shape changes. In activated T-cells, may play a role in CDC42-mediated F-actin accumulation at the immunological synapse. May play a role in early contractile events in phagocytosis in macrophages. The sequence is that of CDC42 small effector protein 1 (Cdc42se1) from Rattus norvegicus (Rat).